The sequence spans 142 residues: Large ribosomal subunit protein uL13c (142 aa).

Belongs to the universal ribosomal protein uL13 family. In terms of assembly, part of the 50S ribosomal subunit.

The protein localises to the plastid. It is found in the chloroplast. The protein is Large ribosomal subunit protein uL13c of Pyropia yezoensis (Susabi-nori).